The following is a 547-amino-acid chain: Glucose-6-phosphate isomerase (547 aa).

Glu351 (proton donor) is an active-site residue. Residues His382 and Lys510 contribute to the active site.

The protein belongs to the GPI family.

The protein resides in the cytoplasm. The enzyme catalyses alpha-D-glucose 6-phosphate = beta-D-fructose 6-phosphate. The protein operates within carbohydrate biosynthesis; gluconeogenesis. It participates in carbohydrate degradation; glycolysis; D-glyceraldehyde 3-phosphate and glycerone phosphate from D-glucose: step 2/4. Functionally, catalyzes the reversible isomerization of glucose-6-phosphate to fructose-6-phosphate. This is Glucose-6-phosphate isomerase from Beijerinckia indica subsp. indica (strain ATCC 9039 / DSM 1715 / NCIMB 8712).